Here is a 167-residue protein sequence, read N- to C-terminus: UPF0262 protein Nwi_0248 (167 aa).

This sequence belongs to the UPF0262 family.

This is UPF0262 protein Nwi_0248 from Nitrobacter winogradskyi (strain ATCC 25391 / DSM 10237 / CIP 104748 / NCIMB 11846 / Nb-255).